The following is a 257-amino-acid chain: Hydroxyacylglutathione hydrolase (257 aa).

Zn(2+) is bound by residues H58, H60, D62, H63, H116, D135, and H173.

This sequence belongs to the metallo-beta-lactamase superfamily. Glyoxalase II family. As to quaternary structure, monomer. Zn(2+) serves as cofactor.

The enzyme catalyses an S-(2-hydroxyacyl)glutathione + H2O = a 2-hydroxy carboxylate + glutathione + H(+). It functions in the pathway secondary metabolite metabolism; methylglyoxal degradation; (R)-lactate from methylglyoxal: step 2/2. Its function is as follows. Thiolesterase that catalyzes the hydrolysis of S-D-lactoyl-glutathione to form glutathione and D-lactic acid. This Brucella melitensis biotype 1 (strain ATCC 23456 / CCUG 17765 / NCTC 10094 / 16M) protein is Hydroxyacylglutathione hydrolase.